The following is a 334-amino-acid chain: uncharacterized protein (334 aa).

2 helical membrane-spanning segments follow: residues 19–39 (AFLRVIGLCGLFSVIAISFGI) and 55–75 (LIVLGSVVLFLAFVIHFAALF). The interval 308–334 (KPESKSSSQKSVETEIEKEVKDKLAKN) is disordered. Positions 319-334 (VETEIEKEVKDKLAKN) are enriched in basic and acidic residues.

The protein resides in the cell membrane. This is an uncharacterized protein from Mycoplasma genitalium (strain ATCC 33530 / DSM 19775 / NCTC 10195 / G37) (Mycoplasmoides genitalium).